The chain runs to 481 residues: Glutamate--glyoxylate aminotransferase 1 (481 aa).

The residue at position 291 (lysine 291) is an N6-(pyridoxal phosphate)lysine. The Peroxisomal targeting signal motif lies at 479 to 481; sequence SKM.

It belongs to the class-I pyridoxal-phosphate-dependent aminotransferase family. Alanine aminotransferase subfamily. Homodimer. Pyridoxal 5'-phosphate is required as a cofactor. The N-terminus is blocked. Mostly expressed in leaves, and, to a lower extent, in shoots, stems, flowers, seedlings and green siliques.

It is found in the peroxisome. It catalyses the reaction L-alanine + 2-oxoglutarate = pyruvate + L-glutamate. It carries out the reaction glyoxylate + L-alanine = glycine + pyruvate. The catalysed reaction is glycine + 2-oxoglutarate = glyoxylate + L-glutamate. Its pathway is amino-acid biosynthesis; glycine biosynthesis; glycine from glyoxylate: step 1/1. It participates in photosynthesis; C4 acid pathway. The protein operates within amino-acid degradation; L-alanine degradation via transaminase pathway; pyruvate from L-alanine: step 1/1. Its function is as follows. Catalyzes the glutamate:glyoxylate (GGT or GGAT), alanine:glyoxylate (AGT), alanine:2-oxoglutarate (AKT) and glutamate:pyruvate (GPT) aminotransferase reactions in peroxisomes. Required for abscisic acid (ABA)- and stress-mediated responses in an H(2)O(2)-dependent manner. Functions as a photorespiratory aminotransferase that modulates amino acid content during photorespiration (GGAT activity); promotes serine, glycine and citrulline metabolism in response to light. This chain is Glutamate--glyoxylate aminotransferase 1 (GGAT1), found in Arabidopsis thaliana (Mouse-ear cress).